The sequence spans 381 residues: Succinate--CoA ligase [ADP-forming] subunit beta (381 aa).

The ATP-grasp domain maps to 9–236; the sequence is KTIFADAGIP…ESYEDDLERK (228 aa). ATP-binding positions include lysine 45, 52 to 54, glutamate 91, valine 94, and glutamate 99; that span reads GRG. 2 residues coordinate Mg(2+): asparagine 191 and aspartate 205. Residues asparagine 256 and 313–315 contribute to the substrate site; that span reads GIT.

Belongs to the succinate/malate CoA ligase beta subunit family. Heterotetramer of two alpha and two beta subunits. Requires Mg(2+) as cofactor.

The enzyme catalyses succinate + ATP + CoA = succinyl-CoA + ADP + phosphate. It catalyses the reaction GTP + succinate + CoA = succinyl-CoA + GDP + phosphate. It functions in the pathway carbohydrate metabolism; tricarboxylic acid cycle; succinate from succinyl-CoA (ligase route): step 1/1. Functionally, succinyl-CoA synthetase functions in the citric acid cycle (TCA), coupling the hydrolysis of succinyl-CoA to the synthesis of either ATP or GTP and thus represents the only step of substrate-level phosphorylation in the TCA. The beta subunit provides nucleotide specificity of the enzyme and binds the substrate succinate, while the binding sites for coenzyme A and phosphate are found in the alpha subunit. The chain is Succinate--CoA ligase [ADP-forming] subunit beta from Halorubrum lacusprofundi (strain ATCC 49239 / DSM 5036 / JCM 8891 / ACAM 34).